We begin with the raw amino-acid sequence, 497 residues long: MTVFLSFAFLAAILTHIGCSNQRRSPENGGRRYNRIQHGQCAYTFILPEHDGNCRESTTDQYNTNALQRDAPHVEQDFSSQKLQHLEHVMENYTQWLQKIENYIVENMKSEMAQIQQNAVQNHTATMLEIGTSLLSQTAEQTRKLTDVETQVLNQTSRLEIQLLENSLSTYKLEKQLLQQTNEILKIHEKNSLLEHKIFEMEGKHKEELDTLKEEKENLQGLVTRQTYIIQELEKQLNRATTNNSVLQKQQLELMDTVHNLVNLCTKEVLLKGGKKEEEKPFRDCADVYQAGFNKSGIYTIYINNMPEPKKVFCNMDLNGGGWTVIQHREDGSLDFQRGWKEYKMGFGNPSGEYWLGNEFIFAITSQRQYTLRIELLDWEGNRAYSQYDRFHIGNEKQNYRLYLKGHTGTAGKQSSLILHGADFSTKDADNDNCMCKCALMLTGGWWFDACGPSNLNGMFYTAGQNHGKLNGIKWHYFKGPSYSLRSTTMMIRPLDF.

The first 15 residues, 1-15 (MTVFLSFAFLAAILT), serve as a signal peptide directing secretion. N-linked (GlcNAc...) asparagine glycans are attached at residues asparagine 92, asparagine 122, asparagine 154, asparagine 243, and asparagine 294. The stretch at 153 to 261 (LNQTSRLEIQ…LELMDTVHNL (109 aa)) forms a coiled coil. The Fibrinogen C-terminal domain occupies 276–496 (KEEEKPFRDC…STTMMIRPLD (221 aa)). Cystine bridges form between cysteine 285/cysteine 314 and cysteine 438/cysteine 451.

In terms of assembly, homooligomer. Interacts with TEK/TIE2. Interacts with SVEP1/polydom. Interacts with THBD; this interaction significantly inhibits the generation of activated PC and TAFIa/CPB2 by the thrombin/thrombomodulin complex.

It localises to the secreted. Its function is as follows. Binds and activates TIE2 receptor by inducing its tyrosine phosphorylation. Implicated in endothelial developmental processes later and distinct from that of VEGF. Appears to play a crucial role in mediating reciprocal interactions between the endothelium and surrounding matrix and mesenchyme. Mediates blood vessel maturation/stability. It may play an important role in the heart early development. The chain is Angiopoietin-1 (ANGPT1) from Bos taurus (Bovine).